The primary structure comprises 401 residues: NAD(P)H-quinone oxidoreductase subunit H, chloroplastic (401 aa).

The protein belongs to the complex I 49 kDa subunit family. As to quaternary structure, NDH is composed of at least 16 different subunits, 5 of which are encoded in the nucleus.

The protein localises to the plastid. Its subcellular location is the chloroplast thylakoid membrane. The catalysed reaction is a plastoquinone + NADH + (n+1) H(+)(in) = a plastoquinol + NAD(+) + n H(+)(out). It catalyses the reaction a plastoquinone + NADPH + (n+1) H(+)(in) = a plastoquinol + NADP(+) + n H(+)(out). Its function is as follows. NDH shuttles electrons from NAD(P)H:plastoquinone, via FMN and iron-sulfur (Fe-S) centers, to quinones in the photosynthetic chain and possibly in a chloroplast respiratory chain. The immediate electron acceptor for the enzyme in this species is believed to be plastoquinone. Couples the redox reaction to proton translocation, and thus conserves the redox energy in a proton gradient. This is NAD(P)H-quinone oxidoreductase subunit H, chloroplastic from Aethionema cordifolium (Lebanon stonecress).